The following is a 180-amino-acid chain: UPF0102 protein Tery_0733 (180 aa).

Belongs to the UPF0102 family.

The protein is UPF0102 protein Tery_0733 of Trichodesmium erythraeum (strain IMS101).